A 355-amino-acid polypeptide reads, in one-letter code: UDP-3-O-acylglucosamine N-acyltransferase (355 aa).

Residue histidine 258 is the Proton acceptor of the active site.

This sequence belongs to the transferase hexapeptide repeat family. LpxD subfamily. As to quaternary structure, homotrimer.

The catalysed reaction is a UDP-3-O-[(3R)-3-hydroxyacyl]-alpha-D-glucosamine + a (3R)-hydroxyacyl-[ACP] = a UDP-2-N,3-O-bis[(3R)-3-hydroxyacyl]-alpha-D-glucosamine + holo-[ACP] + H(+). The protein operates within bacterial outer membrane biogenesis; LPS lipid A biosynthesis. Functionally, catalyzes the N-acylation of UDP-3-O-acylglucosamine using 3-hydroxyacyl-ACP as the acyl donor. Is involved in the biosynthesis of lipid A, a phosphorylated glycolipid that anchors the lipopolysaccharide to the outer membrane of the cell. This is UDP-3-O-acylglucosamine N-acyltransferase from Bradyrhizobium sp. (strain ORS 278).